The following is a 568-amino-acid chain: DEAD-box ATP-dependent RNA helicase 51 (568 aa).

2 stretches are compositionally biased toward basic and acidic residues: residues Met1–Lys13 and Lys23–Lys47. The tract at residues Met1 to Glu70 is disordered. The stretch at Lys13–Ile78 forms a coiled coil. The segment covering Glu60–Glu70 has biased composition (acidic residues). Residues Val89–Ala117 carry the Q motif motif. The 176-residue stretch at Ile120–Val295 folds into the Helicase ATP-binding domain. ATP is bound at residue Ala133–Thr140. Positions Asp243–Asp246 match the DEAD box motif. Residues Arg321 to Ser468 enclose the Helicase C-terminal domain. Residues Lys540–Ala568 form a disordered region.

Belongs to the DEAD box helicase family. DDX18/HAS1 subfamily.

It carries out the reaction ATP + H2O = ADP + phosphate + H(+). This is DEAD-box ATP-dependent RNA helicase 51 (RH51) from Arabidopsis thaliana (Mouse-ear cress).